We begin with the raw amino-acid sequence, 511 residues long: Putative polyol transporter 1 (511 aa).

Helical transmembrane passes span 27–47 (FACAILASMTSIILGYDIGVM), 63–83 (VQLEILMGILNIYSLVGSGAA), 94–114 (YTIVLAGAFFFCGALLMGFAT), 124–144 (FVAGIGVGYAMMIAPVYTAEV), 151–171 (GFLTSFPEIFINIGILLGYVS), 186–206 (FMLGVGAVPSVFLAIGVLAMP), 284–304 (ILIACLGIHFAQQASGIDAVV), 324–344 (LATVAVGVVKTLFIVVGTCVV), 351–371 (ALLLTSMGGMFLSLTALGTSL), 384–404 (WAIGLAVTTVMTFVATFSIGA), 424–444 (GASLGVMLNRLMSGIIGMTFL), and 454–474 (GAFLLFAGVAAAAWVFFFTFL).

It belongs to the major facilitator superfamily. Sugar transporter (TC 2.A.1.1) family.

The protein resides in the membrane. Its function is as follows. Plasma membrane sugar-proton symporter. In Arabidopsis thaliana (Mouse-ear cress), this protein is Putative polyol transporter 1 (PLT1).